A 159-amino-acid chain; its full sequence is ATP synthase subunit b 2 (159 aa).

Residues 1–21 (MDATFWALIGLIIFLAILAYL) form a helical membrane-spanning segment.

Belongs to the ATPase B chain family. In terms of assembly, F-type ATPases have 2 components, F(1) - the catalytic core - and F(0) - the membrane proton channel. F(1) has five subunits: alpha(3), beta(3), gamma(1), delta(1), epsilon(1). F(0) has three main subunits: a(1), b(2) and c(10-14). The alpha and beta chains form an alternating ring which encloses part of the gamma chain. F(1) is attached to F(0) by a central stalk formed by the gamma and epsilon chains, while a peripheral stalk is formed by the delta and b chains.

The protein resides in the cell inner membrane. In terms of biological role, f(1)F(0) ATP synthase produces ATP from ADP in the presence of a proton or sodium gradient. F-type ATPases consist of two structural domains, F(1) containing the extramembraneous catalytic core and F(0) containing the membrane proton channel, linked together by a central stalk and a peripheral stalk. During catalysis, ATP synthesis in the catalytic domain of F(1) is coupled via a rotary mechanism of the central stalk subunits to proton translocation. Its function is as follows. Component of the F(0) channel, it forms part of the peripheral stalk, linking F(1) to F(0). The chain is ATP synthase subunit b 2 from Brucella anthropi (strain ATCC 49188 / DSM 6882 / CCUG 24695 / JCM 21032 / LMG 3331 / NBRC 15819 / NCTC 12168 / Alc 37) (Ochrobactrum anthropi).